The following is a 382-amino-acid chain: S-adenosylmethionine synthase (382 aa).

ATP is bound at residue H16. D18 is a Mg(2+) binding site. Residue E44 coordinates K(+). E57 and Q100 together coordinate L-methionine. Residues 100–110 (QSPDIAQGVDN) form a flexible loop region. Residues 165–167 (DAK), 231–232 (RF), D240, 246–247 (RK), and K267 contribute to the ATP site. D240 lines the L-methionine pocket. K271 contributes to the L-methionine binding site.

The protein belongs to the AdoMet synthase family. In terms of assembly, homotetramer; dimer of dimers. Mg(2+) serves as cofactor. It depends on K(+) as a cofactor.

Its subcellular location is the cytoplasm. It carries out the reaction L-methionine + ATP + H2O = S-adenosyl-L-methionine + phosphate + diphosphate. It functions in the pathway amino-acid biosynthesis; S-adenosyl-L-methionine biosynthesis; S-adenosyl-L-methionine from L-methionine: step 1/1. Its function is as follows. Catalyzes the formation of S-adenosylmethionine (AdoMet) from methionine and ATP. The overall synthetic reaction is composed of two sequential steps, AdoMet formation and the subsequent tripolyphosphate hydrolysis which occurs prior to release of AdoMet from the enzyme. This is S-adenosylmethionine synthase from Legionella pneumophila (strain Lens).